A 173-amino-acid chain; its full sequence is Siroheme decarboxylase alpha subunit (173 aa).

Positions 115 and 119 each coordinate substrate.

Belongs to the Ahb/Nir family. As to quaternary structure, forms a heterodimer composed of AhbA and AhbB.

It catalyses the reaction siroheme + 2 H(+) = 12,18-didecarboxysiroheme + 2 CO2. The protein operates within porphyrin-containing compound metabolism; protoheme biosynthesis. Involved in siroheme-dependent heme b biosynthesis. Catalyzes the decarboxylation of siroheme into didecarboxysiroheme. Siroheme is decarboxylated to monodecarboxysiroheme, which is in turn decarboxylated to didecarboxysiroheme. This is Siroheme decarboxylase alpha subunit from Desulfovibrio desulfuricans (strain ATCC 27774 / DSM 6949 / MB).